We begin with the raw amino-acid sequence, 282 residues long: uncharacterized protein (282 aa).

An HTH rpiR-type domain is found at Ser-4–Tyr-80. The H-T-H motif DNA-binding region spans Val-40–Arg-59. The SIS domain maps to Ile-125–Glu-265.

This is an uncharacterized protein from Providencia stuartii.